The sequence spans 297 residues: tRNA pseudouridine synthase B (297 aa).

The Nucleophile role is filled by aspartate 44.

Belongs to the pseudouridine synthase TruB family. Type 1 subfamily.

It carries out the reaction uridine(55) in tRNA = pseudouridine(55) in tRNA. Functionally, responsible for synthesis of pseudouridine from uracil-55 in the psi GC loop of transfer RNAs. The polypeptide is tRNA pseudouridine synthase B (Corynebacterium glutamicum (strain R)).